The following is a 122-amino-acid chain: Large ribosomal subunit protein uL14 (122 aa).

This sequence belongs to the universal ribosomal protein uL14 family. Part of the 50S ribosomal subunit. Forms a cluster with proteins L3 and L19. In the 70S ribosome, L14 and L19 interact and together make contacts with the 16S rRNA in bridges B5 and B8.

Binds to 23S rRNA. Forms part of two intersubunit bridges in the 70S ribosome. In Ralstonia nicotianae (strain ATCC BAA-1114 / GMI1000) (Ralstonia solanacearum), this protein is Large ribosomal subunit protein uL14.